A 239-amino-acid polypeptide reads, in one-letter code: Phosphoribosylaminoimidazole-succinocarboxamide synthase (239 aa).

Belongs to the SAICAR synthetase family.

It carries out the reaction 5-amino-1-(5-phospho-D-ribosyl)imidazole-4-carboxylate + L-aspartate + ATP = (2S)-2-[5-amino-1-(5-phospho-beta-D-ribosyl)imidazole-4-carboxamido]succinate + ADP + phosphate + 2 H(+). It functions in the pathway purine metabolism; IMP biosynthesis via de novo pathway; 5-amino-1-(5-phospho-D-ribosyl)imidazole-4-carboxamide from 5-amino-1-(5-phospho-D-ribosyl)imidazole-4-carboxylate: step 1/2. This chain is Phosphoribosylaminoimidazole-succinocarboxamide synthase, found in Psychrobacter sp. (strain PRwf-1).